A 333-amino-acid polypeptide reads, in one-letter code: Biotin synthase (333 aa).

Positions 54-287 (ANHGAIHACS…TKIIKFAAGR (234 aa)) constitute a Radical SAM core domain. The [4Fe-4S] cluster site is built by cysteine 72, cysteine 76, and cysteine 79. 3 residues coordinate [2Fe-2S] cluster: cysteine 151, cysteine 212, and lysine 282.

Belongs to the radical SAM superfamily. Biotin synthase family. As to quaternary structure, homodimer. Requires [4Fe-4S] cluster as cofactor. [2Fe-2S] cluster is required as a cofactor.

The enzyme catalyses (4R,5S)-dethiobiotin + (sulfur carrier)-SH + 2 reduced [2Fe-2S]-[ferredoxin] + 2 S-adenosyl-L-methionine = (sulfur carrier)-H + biotin + 2 5'-deoxyadenosine + 2 L-methionine + 2 oxidized [2Fe-2S]-[ferredoxin]. Its pathway is cofactor biosynthesis; biotin biosynthesis; biotin from 7,8-diaminononanoate: step 2/2. Functionally, catalyzes the conversion of dethiobiotin (DTB) to biotin by the insertion of a sulfur atom into dethiobiotin via a radical-based mechanism. This is Biotin synthase from Chlorobaculum tepidum (strain ATCC 49652 / DSM 12025 / NBRC 103806 / TLS) (Chlorobium tepidum).